Here is a 291-residue protein sequence, read N- to C-terminus: 4-diphosphocytidyl-2-C-methyl-D-erythritol kinase (291 aa).

Lysine 14 is an active-site residue. 96-106 provides a ligand contact to ATP; sequence PFGAGLGGGSS. Residue aspartate 138 is part of the active site.

It belongs to the GHMP kinase family. IspE subfamily.

It carries out the reaction 4-CDP-2-C-methyl-D-erythritol + ATP = 4-CDP-2-C-methyl-D-erythritol 2-phosphate + ADP + H(+). The protein operates within isoprenoid biosynthesis; isopentenyl diphosphate biosynthesis via DXP pathway; isopentenyl diphosphate from 1-deoxy-D-xylulose 5-phosphate: step 3/6. Catalyzes the phosphorylation of the position 2 hydroxy group of 4-diphosphocytidyl-2C-methyl-D-erythritol. The sequence is that of 4-diphosphocytidyl-2-C-methyl-D-erythritol kinase from Chlorobium phaeovibrioides (strain DSM 265 / 1930) (Prosthecochloris vibrioformis (strain DSM 265)).